We begin with the raw amino-acid sequence, 859 residues long: Chitin synthase 1 (859 aa).

The tract at residues 1–22 (MRRWFKKTLPRPPDEEESAGLT) is disordered. The next 5 helical transmembrane spans lie at 544 to 564 (LATIVFGWFNIGNFFIIFYIL), 615 to 635 (MVIMYSILMGYLLFCSGWIAY), 662 to 682 (FINIVISLSSTYGMYLVVSII), 793 to 813 (YVVLTWILSNLFLVGIVLSIP), and 833 to 853 (LWSVVAFSVFRFIGCIFYLFI).

Belongs to the chitin synthase family.

It localises to the cell membrane. It catalyses the reaction [(1-&gt;4)-N-acetyl-beta-D-glucosaminyl](n) + UDP-N-acetyl-alpha-D-glucosamine = [(1-&gt;4)-N-acetyl-beta-D-glucosaminyl](n+1) + UDP + H(+). Polymerizes chitin, a structural polymer of the cell wall and septum, by transferring the sugar moiety of UDP-GlcNAc to the non-reducing end of the growing chitin polymer. The sequence is that of Chitin synthase 1 (chs1) from Schizosaccharomyces pombe (strain 972 / ATCC 24843) (Fission yeast).